The sequence spans 373 residues: Chaperone protein DnaJ (373 aa).

A J domain is found at 5–70 (CYYEVLEVSR…EKRSRYDRFG (66 aa)). Residues 134–212 (GTEVELNIPV…CRGAGYVRKQ (79 aa)) form a CR-type zinc finger. Cys-147, Cys-150, Cys-164, Cys-167, Cys-186, Cys-189, Cys-200, and Cys-203 together coordinate Zn(2+). 4 CXXCXGXG motif repeats span residues 147–154 (CDTCEGSG), 164–171 (CSHCGGRG), 186–193 (CPACNGRG), and 200–207 (CSECRGAG).

The protein belongs to the DnaJ family. In terms of assembly, homodimer. The cofactor is Zn(2+).

Its subcellular location is the cytoplasm. Its function is as follows. Participates actively in the response to hyperosmotic and heat shock by preventing the aggregation of stress-denatured proteins and by disaggregating proteins, also in an autonomous, DnaK-independent fashion. Unfolded proteins bind initially to DnaJ; upon interaction with the DnaJ-bound protein, DnaK hydrolyzes its bound ATP, resulting in the formation of a stable complex. GrpE releases ADP from DnaK; ATP binding to DnaK triggers the release of the substrate protein, thus completing the reaction cycle. Several rounds of ATP-dependent interactions between DnaJ, DnaK and GrpE are required for fully efficient folding. Also involved, together with DnaK and GrpE, in the DNA replication of plasmids through activation of initiation proteins. The chain is Chaperone protein DnaJ from Maridesulfovibrio salexigens (strain ATCC 14822 / DSM 2638 / NCIMB 8403 / VKM B-1763) (Desulfovibrio salexigens).